A 323-amino-acid chain; its full sequence is SPbeta prophage-derived uncharacterized protein YorG (323 aa).

A coiled-coil region spans residues 222 to 272 (TAENLEKAIIEAVERQEQAEGIVAVTYEEQKQNNASEELDFNSLMDQIKEI).

The sequence is that of SPbeta prophage-derived uncharacterized protein YorG (yorG) from Bacillus subtilis (strain 168).